The primary structure comprises 47 residues: MAAFTLDLMAQLPEAYQAYAPAVDVLPLIPIFFFLLVFVWQASVGFR.

Residues 1-10 constitute a propeptide that is removed on maturation; sequence MAAFTLDLMA. Residues 20–40 traverse the membrane as a helical segment; sequence APAVDVLPLIPIFFFLLVFVW.

The protein belongs to the PsbK family. In terms of assembly, PSII is composed of 1 copy each of membrane proteins PsbA, PsbB, PsbC, PsbD, PsbE, PsbF, PsbH, PsbI, PsbJ, PsbK, PsbL, PsbM, PsbT, PsbX, PsbY, Psb30/Ycf12, peripheral proteins PsbO, CyanoQ (PsbQ), PsbU, PsbV and a large number of cofactors. It forms dimeric complexes.

Its subcellular location is the cellular thylakoid membrane. In terms of biological role, one of the components of the core complex of photosystem II (PSII). PSII is a light-driven water:plastoquinone oxidoreductase that uses light energy to abstract electrons from H(2)O, generating O(2) and a proton gradient subsequently used for ATP formation. It consists of a core antenna complex that captures photons, and an electron transfer chain that converts photonic excitation into a charge separation. The chain is Photosystem II reaction center protein K from Prochlorococcus marinus (strain MIT 9303).